A 303-amino-acid chain; its full sequence is Elongation factor Ts (303 aa).

The interval 80-83 (TDFV) is involved in Mg(2+) ion dislocation from EF-Tu.

Belongs to the EF-Ts family.

The protein localises to the cytoplasm. Associates with the EF-Tu.GDP complex and induces the exchange of GDP to GTP. It remains bound to the aminoacyl-tRNA.EF-Tu.GTP complex up to the GTP hydrolysis stage on the ribosome. This is Elongation factor Ts from Clostridium botulinum (strain Eklund 17B / Type B).